Consider the following 84-residue polypeptide: U1-hexatoxin-Iw1a (84 aa).

The signal sequence occupies residues 1–18 (MLKFVVVICLVIMAITFA). 5 disulfide bridges follow: Cys21–Cys32, Cys26–Cys40, Cys31–Cys66, Cys50–Cys74, and Cys68–Cys81.

It belongs to the MIT-like AcTx family. Expressed by the venom gland.

Its subcellular location is the secreted. The sequence is that of U1-hexatoxin-Iw1a from Illawarra wisharti (Illawarra funnel-web spider).